The following is a 442-amino-acid chain: MTRVKTVMTNENNKYDFIFKGINLTKSIFIVGLVIRLVLIVFAEWQDANMLVKYTDIDYVVYTDASRAVVNGLSPYDRSTYRYTPLLAYLLVPNILIHPAFGKLLFVICDMIIAYLLKGILLERFPKITSRTLLICLASWLLNPFSINVSTRGNAESVIGAMVLASFYFLTKKNLTLASIFYGLSVHFKIYPIIYSIPMYLYIDENFFSRKPSEYTSLNNNFKNIFKNFFNKNRLKFFLISAFTFISLTFIMYLIYGYIFLFETYLYHVIRADNRHNFSVYFYQIYLNTPIVETVGDLVGKVNGSNMIVALASFLPQVILLLAITLVYFNDLEFCLLLETITFVAFNKVCTVQYFIWYYSILPLVIPSSSLGLVQYIILFAVWMGSQGLWFYSAFNLEFLGLQTFWNIWVAGLLFFIANIYILVKLILNHNPIKVNQYLKSK.

A run of 8 helical transmembrane segments spans residues 22-42 (INLT…LIVF), 95-115 (ILIH…IIAY), 177-197 (LASI…IYSI), 242-262 (AFTF…IFLF), 307-327 (MIVA…ITLV), 336-356 (LLLE…QYFI), 361-381 (ILPL…ILFA), and 408-428 (IWVA…KLIL).

It belongs to the PIGM family.

It is found in the endoplasmic reticulum membrane. Its pathway is glycolipid biosynthesis; glycosylphosphatidylinositol-anchor biosynthesis. Mannosyltransferase involved in glycosylphosphatidylinositol-anchor biosynthesis. Transfers the first alpha-1,4-mannose to GlcN-acyl-PI during GPI precursor assembly. The chain is GPI mannosyltransferase 1 (pigm) from Dictyostelium discoideum (Social amoeba).